We begin with the raw amino-acid sequence, 320 residues long: D-alanine--D-alanine ligase (320 aa).

The ATP-grasp domain occupies 104-308 (KRVCLSHGVP…YEDLCVEILR (205 aa)). Residue 134–189 (AAEFGMPLMLKAPHEGSTIGIAKVETAEGMQAGFDLCAKYDDVVLVEQFVKGRELT) coordinates ATP. Mg(2+) contacts are provided by aspartate 261, glutamate 275, and asparagine 277.

It belongs to the D-alanine--D-alanine ligase family. The cofactor is Mg(2+). Mn(2+) is required as a cofactor.

The protein resides in the cytoplasm. It catalyses the reaction 2 D-alanine + ATP = D-alanyl-D-alanine + ADP + phosphate + H(+). It functions in the pathway cell wall biogenesis; peptidoglycan biosynthesis. Cell wall formation. The chain is D-alanine--D-alanine ligase from Janthinobacterium sp. (strain Marseille) (Minibacterium massiliensis).